The following is a 381-amino-acid chain: Chymosin (381 aa).

An N-terminal signal peptide occupies residues 1–16 (MRCLVVLLAVFALSQG). A propeptide spans 17–58 (AEITRIPLYKGKSLRKALKEHGLLEDFLQKQQYGISSKYSGF) (activation peptide). The Peptidase A1 domain occupies 74 to 378 (YFGKIYLGTP…DRANNLVGLA (305 aa)). The active site involves Asp-92. Intrachain disulfides connect Cys-105–Cys-110 and Cys-265–Cys-269. Asp-274 is an active-site residue. Residues Cys-308 and Cys-341 are joined by a disulfide bond.

This sequence belongs to the peptidase A1 family. As to quaternary structure, monomer.

The enzyme catalyses Broad specificity similar to that of pepsin A. Clots milk by cleavage of a single 104-Ser-Phe-|-Met-Ala-107 bond in kappa-chain of casein.. Chymosin is synthesized in the mucosa of the abomasum (fourth stomach) of young (unweaned) ruminants. The enzyme hydrolyzes casein to paracasein. The protein is Chymosin (CYM) of Bos taurus (Bovine).